Reading from the N-terminus, the 86-residue chain is ATP synthase subunit c (86 aa).

2 helical membrane-spanning segments follow: residues 8–28 and 64–84; these read VLGC…GPGI and TTGL…PLLG.

This sequence belongs to the ATPase C chain family. F-type ATPases have 2 components, F(1) - the catalytic core - and F(0) - the membrane proton channel. F(1) has five subunits: alpha(3), beta(3), gamma(1), delta(1), epsilon(1). F(0) has three main subunits: a(1), b(2) and c(10-14). The alpha and beta chains form an alternating ring which encloses part of the gamma chain. F(1) is attached to F(0) by a central stalk formed by the gamma and epsilon chains, while a peripheral stalk is formed by the delta and b chains.

The protein localises to the cell membrane. Functionally, f(1)F(0) ATP synthase produces ATP from ADP in the presence of a proton or sodium gradient. F-type ATPases consist of two structural domains, F(1) containing the extramembraneous catalytic core and F(0) containing the membrane proton channel, linked together by a central stalk and a peripheral stalk. During catalysis, ATP synthesis in the catalytic domain of F(1) is coupled via a rotary mechanism of the central stalk subunits to proton translocation. In terms of biological role, key component of the F(0) channel; it plays a direct role in translocation across the membrane. A homomeric c-ring of between 10-14 subunits forms the central stalk rotor element with the F(1) delta and epsilon subunits. The sequence is that of ATP synthase subunit c from Lachnoclostridium phytofermentans (strain ATCC 700394 / DSM 18823 / ISDg) (Clostridium phytofermentans).